Here is a 569-residue protein sequence, read N- to C-terminus: Urease subunit alpha (569 aa).

Positions 131–569 constitute a Urease domain; that stretch reads GGMDAHIHFI…LPMAQRYFLF (439 aa). The Ni(2+) site is built by H136, H138, and K218. K218 bears the N6-carboxylysine mark. H220 is a substrate binding site. Ni(2+) contacts are provided by H247 and H273. H321 acts as the Proton donor in catalysis. D361 lines the Ni(2+) pocket.

This sequence belongs to the metallo-dependent hydrolases superfamily. Urease alpha subunit family. In terms of assembly, heterotrimer of UreA (gamma), UreB (beta) and UreC (alpha) subunits. Three heterotrimers associate to form the active enzyme. Ni cation serves as cofactor. In terms of processing, carboxylation allows a single lysine to coordinate two nickel ions.

It localises to the cytoplasm. The catalysed reaction is urea + 2 H2O + H(+) = hydrogencarbonate + 2 NH4(+). It functions in the pathway nitrogen metabolism; urea degradation; CO(2) and NH(3) from urea (urease route): step 1/1. This Rhizobium rhizogenes (strain K84 / ATCC BAA-868) (Agrobacterium radiobacter) protein is Urease subunit alpha.